Reading from the N-terminus, the 636-residue chain is Threonine--tRNA ligase (636 aa).

One can recognise a TGS domain in the interval methionine 1 to threonine 61. The tract at residues aspartate 242–proline 533 is catalytic. Residues cysteine 333, histidine 384, and histidine 510 each coordinate Zn(2+).

The protein belongs to the class-II aminoacyl-tRNA synthetase family. Homodimer. The cofactor is Zn(2+).

Its subcellular location is the cytoplasm. The catalysed reaction is tRNA(Thr) + L-threonine + ATP = L-threonyl-tRNA(Thr) + AMP + diphosphate + H(+). Its function is as follows. Catalyzes the attachment of threonine to tRNA(Thr) in a two-step reaction: L-threonine is first activated by ATP to form Thr-AMP and then transferred to the acceptor end of tRNA(Thr). Also edits incorrectly charged L-seryl-tRNA(Thr). The sequence is that of Threonine--tRNA ligase from Saccharophagus degradans (strain 2-40 / ATCC 43961 / DSM 17024).